Consider the following 449-residue polypeptide: Agmatine hydroxycinnamoyltransferase 1 (449 aa).

Residues H153 and D392 each act as proton acceptor in the active site.

Belongs to the plant acyltransferase family. As to expression, highly expressed in roots. Expressed at low levels in flowers.

In terms of biological role, hydroxycinnamoyl transferase that catalyzes the transfer of an acyl from p-coumaryol-CoA to agmatine, to produce coumaroyl agmatine. Can use feruloyl-CoA, caffeoyl-CoA and sinapoyl-CoA as acyl donors. Seems to be able to transfer the acyl group from p-coumaroyl-CoA and feruloyl-CoA to the acyl acceptors putrescine and spermidine. The polypeptide is Agmatine hydroxycinnamoyltransferase 1 (Oryza sativa subsp. japonica (Rice)).